A 173-amino-acid chain; its full sequence is uncharacterized protein (173 aa).

The protein belongs to the M.jannaschii MJ0150/MJ0739/MJ0745/MJ1460/MJ1642 family.

This is an uncharacterized protein from Methanocaldococcus jannaschii (strain ATCC 43067 / DSM 2661 / JAL-1 / JCM 10045 / NBRC 100440) (Methanococcus jannaschii).